The sequence spans 184 residues: ATP synthase subunit b, chloroplastic (184 aa).

The chain crosses the membrane as a helical span at residues 27–49 (LATNPINLSVVLGVLIFFGKGVL).

This sequence belongs to the ATPase B chain family. F-type ATPases have 2 components, F(1) - the catalytic core - and F(0) - the membrane proton channel. F(1) has five subunits: alpha(3), beta(3), gamma(1), delta(1), epsilon(1). F(0) has four main subunits: a(1), b(1), b'(1) and c(10-14). The alpha and beta chains form an alternating ring which encloses part of the gamma chain. F(1) is attached to F(0) by a central stalk formed by the gamma and epsilon chains, while a peripheral stalk is formed by the delta, b and b' chains.

The protein resides in the plastid. The protein localises to the chloroplast thylakoid membrane. Functionally, f(1)F(0) ATP synthase produces ATP from ADP in the presence of a proton or sodium gradient. F-type ATPases consist of two structural domains, F(1) containing the extramembraneous catalytic core and F(0) containing the membrane proton channel, linked together by a central stalk and a peripheral stalk. During catalysis, ATP synthesis in the catalytic domain of F(1) is coupled via a rotary mechanism of the central stalk subunits to proton translocation. Component of the F(0) channel, it forms part of the peripheral stalk, linking F(1) to F(0). The chain is ATP synthase subunit b, chloroplastic from Buxus microphylla (Littleleaf boxwood).